Reading from the N-terminus, the 589-residue chain is ATP-dependent lipid A-core flippase (589 aa).

Transmembrane regions (helical) follow at residues 37–57, 72–92, 151–171, 173–193, 260–280, and 286–306; these read ALAIGATIVASATEPFVPALL, LWLVPLALMLLFTVRGLSGFL, IMKLARDVLTLLALIGYLVYL, WKLMLVVALLFPAVAFVIQVL, SAITQVLAAMALSAVISIALL, and TTTVGGFVAFVTAMLLLIAPV. The 282-residue stretch at 37–318 folds into the ABC transmembrane type-1 domain; that stretch reads ALAIGATIVA…LSDAATPVTR (282 aa). In terms of domain architecture, ABC transporter spans 350–584; that stretch reads IEFADVSVIY…NGAYAHLYRL (235 aa). 384 to 391 provides a ligand contact to ATP; sequence GASGSGKT.

It belongs to the ABC transporter superfamily. Lipid exporter (TC 3.A.1.106) family. In terms of assembly, homodimer.

It is found in the cell inner membrane. The catalysed reaction is ATP + H2O + lipid A-core oligosaccharideSide 1 = ADP + phosphate + lipid A-core oligosaccharideSide 2.. Involved in lipopolysaccharide (LPS) biosynthesis. Translocates lipid A-core from the inner to the outer leaflet of the inner membrane. Transmembrane domains (TMD) form a pore in the inner membrane and the ATP-binding domain (NBD) is responsible for energy generation. In Polaromonas sp. (strain JS666 / ATCC BAA-500), this protein is ATP-dependent lipid A-core flippase.